Here is a 194-residue protein sequence, read N- to C-terminus: NADH-quinone oxidoreductase subunit B 1 (194 aa).

[4Fe-4S] cluster contacts are provided by Cys-73, Cys-74, Cys-138, and Cys-168.

The protein belongs to the complex I 20 kDa subunit family. In terms of assembly, NDH-1 is composed of 14 different subunits. Subunits NuoB, C, D, E, F, and G constitute the peripheral sector of the complex. [4Fe-4S] cluster serves as cofactor.

It is found in the cell inner membrane. It catalyses the reaction a quinone + NADH + 5 H(+)(in) = a quinol + NAD(+) + 4 H(+)(out). Its function is as follows. NDH-1 shuttles electrons from NADH, via FMN and iron-sulfur (Fe-S) centers, to quinones in the respiratory chain. The immediate electron acceptor for the enzyme in this species is believed to be ubiquinone. Couples the redox reaction to proton translocation (for every two electrons transferred, four hydrogen ions are translocated across the cytoplasmic membrane), and thus conserves the redox energy in a proton gradient. The protein is NADH-quinone oxidoreductase subunit B 1 of Rhizobium etli (strain CIAT 652).